A 245-amino-acid polypeptide reads, in one-letter code: 7-cyano-7-deazaguanine synthase 2 (245 aa).

12–22 (FSGGQDSTTCL) is a binding site for ATP. The Zn(2+) site is built by Cys-200, Cys-215, Cys-218, and Cys-221.

The protein belongs to the QueC family. It depends on Zn(2+) as a cofactor.

It catalyses the reaction 7-carboxy-7-deazaguanine + NH4(+) + ATP = 7-cyano-7-deazaguanine + ADP + phosphate + H2O + H(+). It participates in purine metabolism; 7-cyano-7-deazaguanine biosynthesis. Its function is as follows. Catalyzes the ATP-dependent conversion of 7-carboxy-7-deazaguanine (CDG) to 7-cyano-7-deazaguanine (preQ(0)). This Mesorhizobium japonicum (strain LMG 29417 / CECT 9101 / MAFF 303099) (Mesorhizobium loti (strain MAFF 303099)) protein is 7-cyano-7-deazaguanine synthase 2.